We begin with the raw amino-acid sequence, 395 residues long: Galactokinase (395 aa).

39–42 (EHTD) is a substrate binding site. ATP contacts are provided by residues Ser73 and 127 to 133 (GAGLSSS). Mg(2+)-binding residues include Ser133 and Glu165. The active-site Proton acceptor is the Asp177. Tyr227 contacts substrate.

This sequence belongs to the GHMP kinase family. GalK subfamily.

It is found in the cytoplasm. It carries out the reaction alpha-D-galactose + ATP = alpha-D-galactose 1-phosphate + ADP + H(+). It functions in the pathway carbohydrate metabolism; galactose metabolism. Its function is as follows. Catalyzes the transfer of the gamma-phosphate of ATP to D-galactose to form alpha-D-galactose-1-phosphate (Gal-1-P). This chain is Galactokinase, found in Halalkalibacterium halodurans (strain ATCC BAA-125 / DSM 18197 / FERM 7344 / JCM 9153 / C-125) (Bacillus halodurans).